Reading from the N-terminus, the 625-residue chain is tRNA uridine 5-carboxymethylaminomethyl modification enzyme MnmG (625 aa).

Residue 11–16 (GAGHAG) participates in FAD binding. 271–285 (GPRYCPSIETKIVTF) serves as a coordination point for NAD(+).

This sequence belongs to the MnmG family. As to quaternary structure, homodimer. Heterotetramer of two MnmE and two MnmG subunits. The cofactor is FAD.

It is found in the cytoplasm. In terms of biological role, NAD-binding protein involved in the addition of a carboxymethylaminomethyl (cmnm) group at the wobble position (U34) of certain tRNAs, forming tRNA-cmnm(5)s(2)U34. This Porphyromonas gingivalis (strain ATCC BAA-308 / W83) protein is tRNA uridine 5-carboxymethylaminomethyl modification enzyme MnmG.